A 149-amino-acid polypeptide reads, in one-letter code: Transcription factor MafF (149 aa).

Residues 51–76 (RLKQRRRTLKNRGYAASCRVKRVCQK) are basic motif. The region spanning 51-114 (RLKQRRRTLK…DTLRGKYEAL (64 aa)) is the bZIP domain. A leucine-zipper region spans residues 79–93 (LQKQKMELEWEVDKL).

It belongs to the bZIP family. Maf subfamily. In terms of assembly, monomer and homo- or heterodimer. Highly expressed in the ovary, lower expression in the brain, heart and mesenterium.

It is found in the nucleus. Its function is as follows. Since it lacks a putative transactivation domain, it may behave as a transcriptional repressor when it dimerizes among itself. May also serve as a transcriptional activator by dimerizing with other (usually larger) basic-zipper proteins and recruiting them to specific DNA-binding sites. May be involved in the cellular stress response. The polypeptide is Transcription factor MafF (MAFF) (Gallus gallus (Chicken)).